The following is a 74-amino-acid chain: MKLTCVLIITVLFLTACQLTTAVTYSRGEHKHRALMSTGTNYRLPKTCRSSGRYCRSPYDRRRRYCRRITDACV.

A signal peptide spans 1–22; the sequence is MKLTCVLIITVLFLTACQLTTA. The propeptide occupies 23 to 46; that stretch reads VTYSRGEHKHRALMSTGTNYRLPK. The segment at 56–64 is interacts with alpha-9-alpha-10 (CHRNA9-CHRNA10) nAChR; it reads RSPYDRRRR.

Belongs to the conotoxin O1 superfamily. Post-translationally, the native disulfide bond pairing has not been studied. Three isomers may exist: the bead isomer (I-II; III-IV), the globular isomer (I-III; II-IV), the ribbon isomer (I-IV; II-III). They have all been synthesized and their activity tested. All of them show similar potency on alpha-9-alpha-10 (CHRNA9-CHRNA10) nAChR, showing that disulfide bonds does not significantly affect their activity. In addition, removal of disulfide bonds does not affect the activity on alpha-9-alpha-10 (CHRNA9-CHRNA10) nAChR either. As to expression, expressed by the venom duct.

The protein resides in the secreted. Alpha-conotoxins act on postsynaptic membranes, they bind to the nicotinic acetylcholine receptors (nAChR) and thus inhibit them. This toxin is very potent on alpha-9-alpha-10/CHRNA9-CHRNA10 nAChR (IC(50)=4.61-12 nM for the bead isomer (I-II; III-IV), IC(50)=7-16 nM for the ribbon isomer (I-IV; II-III) and IC(50)=22.7 nM for the globular isomer (I-III; II-IV)). The bead isomer also shows a weak inhibition on other nAChRs (alpha-1-beta-1-delta-epsilon/CHRNA1-CHRNB1-CHRND-CHRNE, alpha-7/CHRNA7, alpha-6/alpha-3-beta-2-beta-3 (CHRNA6/CHRNA3-CHRNB2-CHRNB3), alpha-3-beta-2/CHRNA3-CHRNB2, alpha-2-beta-2/CHRNA2-CHRNB2, alpha-6/alpha-3-beta-4 (CHRNA6/CHRNA3-CHRNB4), alpha-4-beta-2/CHRNA4-CHRNB2, alpha-4-beta-4/CHRNA4-CHRNB4, alpha-2-beta-4/CHRNA2-CHRNB4, alpha-3-beta-4/CHRNA3-CHRNB4). The toxin blockade is voltage-dependent, and its binding site does not overlap with the binding site of the competitive antagonist alpha-conotoxin RgIA. The toxin inhibits Sf9 cell growth. Both the bead and ribbon isomers relieve pain effects in the rat chronic constriction injury (CCI) model of neuropathic pain, and in the acute pain model of tail flick test, but have no effect on motor performance. This chain is Alpha-conotoxin GeXIVA, found in Conus generalis (General cone).